We begin with the raw amino-acid sequence, 489 residues long: tRNA(Ile)-lysidine synthase (489 aa).

35-40 contacts ATP; that stretch reads SGGLDS.

Belongs to the tRNA(Ile)-lysidine synthase family.

The protein resides in the cytoplasm. The enzyme catalyses cytidine(34) in tRNA(Ile2) + L-lysine + ATP = lysidine(34) in tRNA(Ile2) + AMP + diphosphate + H(+). In terms of biological role, ligates lysine onto the cytidine present at position 34 of the AUA codon-specific tRNA(Ile) that contains the anticodon CAU, in an ATP-dependent manner. Cytidine is converted to lysidine, thus changing the amino acid specificity of the tRNA from methionine to isoleucine. This is tRNA(Ile)-lysidine synthase from Burkholderia pseudomallei (strain K96243).